Consider the following 109-residue polypeptide: MFGKGGMGNLMKQAQMMQEKMAKVQEEIARMEMVGESGAGLVKVTMTGAHTVRKVEIDPSLMEDDKEMLEDLIAAACNDAARRIEENQKTKMAEVTGGMQLPPGMKMPF.

The protein belongs to the YbaB/EbfC family. As to quaternary structure, homodimer.

The protein resides in the cytoplasm. Its subcellular location is the nucleoid. Its function is as follows. Binds to DNA and alters its conformation. May be involved in regulation of gene expression, nucleoid organization and DNA protection. The protein is Nucleoid-associated protein Sbal223_1770 of Shewanella baltica (strain OS223).